The following is a 258-amino-acid chain: Deoxyribose-phosphate aldolase (258 aa).

Catalysis depends on aspartate 101, which acts as the Proton donor/acceptor. Lysine 166 acts as the Schiff-base intermediate with acetaldehyde in catalysis. The active-site Proton donor/acceptor is lysine 200.

Belongs to the DeoC/FbaB aldolase family. DeoC type 2 subfamily.

It is found in the cytoplasm. The enzyme catalyses 2-deoxy-D-ribose 5-phosphate = D-glyceraldehyde 3-phosphate + acetaldehyde. It participates in carbohydrate degradation; 2-deoxy-D-ribose 1-phosphate degradation; D-glyceraldehyde 3-phosphate and acetaldehyde from 2-deoxy-alpha-D-ribose 1-phosphate: step 2/2. Functionally, catalyzes a reversible aldol reaction between acetaldehyde and D-glyceraldehyde 3-phosphate to generate 2-deoxy-D-ribose 5-phosphate. The chain is Deoxyribose-phosphate aldolase from Actinobacillus pleuropneumoniae serotype 3 (strain JL03).